A 351-amino-acid chain; its full sequence is Modulator of apoptosis 1 (351 aa).

Positions 49-52 match the LIR motif; sequence YRLL. A BH3-like region spans residues 120-127; it reads LTRALAHE. The tract at residues 202–205 is RASSF1-binding; the sequence is KRRR.

Belongs to the PNMA family. Homodimer. Under normal circumstances, held in an inactive conformation by an intramolecular interaction. Interacts with BAX. Binding to RASSF1 isoform A (RASSF1A) relieves this inhibitory interaction and allows further binding to BAX. Also binds to BCL2 and BCLX. Recruited to the TNFRSF1A and TNFRSF10A complexes in response to their respective cognate ligand, after internalization. Interacts with TRIM39. Interacts with RASSF6. Interacts with ATG8 proteins MAP1LC3A, MAP1LC3B and MAP1LC3C. Does not interact with ATG8 proteins GABARAPL1, GABARAPL2 and GABARAP. Interacts with SQSTM1; promoting dissociation of SQSTM1 inclusion bodies that sequester KEAP1. Post-translationally, ubiquitinated and degraded during mitotic exit by APC/C-Cdh1, this modification is inhibited by TRIM39.

It localises to the cytoplasm. The protein localises to the cytosol. It is found in the mitochondrion outer membrane. Its subcellular location is the extracellular vesicle membrane. In terms of biological role, retrotransposon-derived protein that forms virion-like capsids. Acts as an effector of BAX during apoptosis: enriched at outer mitochondria membrane and associates with BAX upon induction of apoptosis, facilitating BAX-dependent mitochondrial outer membrane permeabilization and apoptosis. Required for death receptor-dependent apoptosis. When associated with RASSF1, promotes BAX conformational change and translocation to mitochondrial membranes in response to TNF and TNFSF10 stimulation. Also promotes autophagy: promotes phagophore closure via association with ATG8 proteins. Acts as an inhibitor of the NFE2L2/NRF2 pathway via interaction with SQSTM1: interaction promotes dissociation of SQSTM1 inclusion bodies that sequester KEAP1, relieving inactivation of the BCR(KEAP1) complex. The chain is Modulator of apoptosis 1 from Macaca fascicularis (Crab-eating macaque).